We begin with the raw amino-acid sequence, 150 residues long: Small ribosomal subunit protein bS6 (150 aa).

The interval 92 to 150 (KGINKPAKPKKTFKKTFVARKFSRDDESKTHSTEEPRRANTKSTYKKSTSFSQDNKNKK) is disordered. Residues 98–109 (AKPKKTFKKTFV) are compositionally biased toward basic residues. Residues 113–129 (FSRDDESKTHSTEEPRR) are compositionally biased toward basic and acidic residues. The span at 132–141 (TKSTYKKSTS) shows a compositional bias: low complexity.

The protein belongs to the bacterial ribosomal protein bS6 family.

Binds together with bS18 to 16S ribosomal RNA. The protein is Small ribosomal subunit protein bS6 of Mycoplasmopsis pulmonis (strain UAB CTIP) (Mycoplasma pulmonis).